The following is a 495-amino-acid chain: Probable lysine-specific demethylase 4A (495 aa).

In terms of domain architecture, JmjN spans 18-60 (IMTFRPSYEEFQNFSAYIEYIESRGAHLAGLAKIQPPAEWVPR). Tyr-139 lines the 2-oxoglutarate pocket. One can recognise a JmjC domain in the interval 149–315 (DEDLDVWNIG…YGKRASICRC (167 aa)). Residues His-195 and Glu-197 each contribute to the Fe cation site. Residues Asn-205 and Lys-213 each coordinate 2-oxoglutarate. Zn(2+) contacts are provided by Cys-241 and His-247. Lys-248 is a binding site for 2-oxoglutarate. His-283 contacts Fe cation. Residues Cys-313 and Cys-315 each coordinate Zn(2+). Ser-409 bears the Phosphoserine mark.

It belongs to the JHDM3 histone demethylase family. The cofactor is Fe(2+).

It is found in the nucleus. It catalyses the reaction N(6),N(6),N(6)-trimethyl-L-lysyl(9)-[histone H3] + 2 2-oxoglutarate + 2 O2 = N(6)-methyl-L-lysyl(9)-[histone H3] + 2 formaldehyde + 2 succinate + 2 CO2. The catalysed reaction is N(6),N(6),N(6)-trimethyl-L-lysyl(36)-[histone H3] + 2 2-oxoglutarate + 2 O2 = N(6)-methyl-L-lysyl(36)-[histone H3] + 2 formaldehyde + 2 succinate + 2 CO2. Its function is as follows. Probable histone demethylase that specifically demethylates 'Lys-9' and 'Lys-36' residues of histone H3, thereby playing a central role in histone code. Demethylation of Lys residue generates formaldehyde and succinate. This chain is Probable lysine-specific demethylase 4A (Kdm4A), found in Drosophila melanogaster (Fruit fly).